A 765-amino-acid polypeptide reads, in one-letter code: MGSNRCPRLGLVPLILGLLSGGVSMTPLPEARPQSPCSLEGIEIKGGTFHLLKEGLVLEYVCPSGFYPYPVQIRTCRSSGSWSTLQTQDRKIVKRAECKAIRCPRPQDFENGEYWPRAAYYNLSDEISFHCYDGYTLRGSANRTCQVTGRWDGQTAICDDGAGYCPNPGIPIGTRKVGTQYRLEDSVTYYCSRGLTLRGSQRRTCQEGGSWSGTEPSCQDSFMYDTPAEVAEAFLSSLTETIEGVDAEDGHIPGDQQKRKIVLDPSGSMNIYLVLDGSDSIGARNFTGAKNCLKDFIEKVASYGVKPKYGLVTYATDPKVLIRVSNPKSADADWVTEQLDKISYDDHKLKAGTNTKKALLEVYNMMSWGVNNFPDNWNRTRHVIVLLTDGLHNMGGDPVTVIHDIRDLLNIGRNRKNPREDYLDIYVFGVGPLVNQENINALASKKDKEQHVFKLKDVDNLEDVFFQMLDESRSLGLCGMVWEHKDGTDYHKQPWHAKISITRPSKGHESCMGAVVSEYFVLTAAHCFTVDDEKHSIKVSLGGKKQEWEIDQVLFHPNYDLNAKTAKDIPEFYDYDVALIRLSKKLKYDQTIRPICLPCTEGSNQALRLPLTTTCQQQMQELLPAKDVKALFVSELTKDHRKILTRKEVYIKNGERKAACERDALQAQGYEKVKVVSEVVTPRFLCTGGVIPYADPNTCKGDSGGPLIIHKKSRFIQVGVISWGVVDICKRQQQAPSYARDFHINLYKVLPWLKEKLKDEDLGFL.

The signal sequence occupies residues 1–25 (MGSNRCPRLGLVPLILGLLSGGVSM). Sushi domains follow at residues 35-100 (SPCS…ECKA), 101-160 (IRCP…ICDD), and 163-220 (GYCP…SCQD). 6 disulfide bridges follow: Cys37–Cys76, Cys62–Cys98, Cys103–Cys145, Cys131–Cys158, Cys165–Cys205, and Cys191–Cys218. 2 N-linked (GlcNAc...) asparagine glycosylation sites follow: Asn122 and Asn142. The 200-residue stretch at 270–469 (NIYLVLDGSD…NLEDVFFQML (200 aa)) folds into the VWFA domain. Residues Ser278 and Ser280 each coordinate Mg(2+). Asn285 is a glycosylation site (N-linked (GlcNAc...) asparagine). Thr353 provides a ligand contact to Mg(2+). Asn378 is a glycosylation site (N-linked (GlcNAc...) asparagine). The 282-residue stretch at 477 to 758 (LCGMVWEHKD…VLPWLKEKLK (282 aa)) folds into the Peptidase S1 domain. 5 disulfide bridges follow: Cys478–Cys596, Cys511–Cys527, Cys599–Cys615, Cys660–Cys686, and Cys699–Cys729. Active-site charge relay system residues include His526 and Asp576. Ser703 acts as the Charge relay system in catalysis.

This sequence belongs to the peptidase S1 family. As to quaternary structure, monomer. Interacts with complement C3b; this interaction is dependent on the presence of Mg(2+). In terms of assembly, catalytic component of the C3 convertase of the alternative complement pathway, also named C3bBb, composed of complement factor B Bb and complement C3b. Catalytic component of the C5 convertase of the alternative complement pathway, also named C3bBb3b, composed of complement factor B Bb and additional molecules of complement C3b. Interacts to CFP; this interaction contributes to the stabilization of the active C3-convertase enzyme complex. Mg(2+) serves as cofactor. The cofactor is Mn(2+). Cleaved by CFD following activation of the alternative complement system, generating Ba and Bb chains. Cleavage and activation takes place when CFB is already associated with complement C3b.

The protein localises to the secreted. The protein resides in the cell surface. The catalysed reaction is Cleavage of Arg-|-Ser bond in complement component C3 alpha-chain to yield C3a and C3b, and Arg-|-Xaa bond in complement component C5 alpha-chain to yield C5a and C5b.. In terms of biological role, precursor of the catalytic component of the C3 and C5 convertase complexes of the alternative pathway of the complement system, a cascade of proteins that leads to phagocytosis and breakdown of pathogens and signaling that strengthens the adaptive immune system. The alternative complement pathway acts as an amplification loop that enhances other complement pathways (classical, lectin and GZMK) by promoting formation of additional C3 and C5 convertases. CFB is cleaved and activated by CFD to generate Ba and Bb chains; Bb chain constituting the catalytic component of the C3 and C5 convertases. Functionally, serine protease component of the complement C3 and C5 convertase complexes of the alternative complement pathway. Following cleavage and activation by factor D (CFD), forms the C3 convertase together with complement C3b. As part of the C3 convertase, cleaves and activates C3 into C3a anaphylatoxin and C3b opsonin, the next components of the complement pathways. When an additional complement C3b molecule binds to the C3 convertase, forms the C5 convertase, which cleaves and activates C5 into C5a anaphylatoxin and C5b component of the membrane attack complex. Involved in proliferation and differentiation of preactivated B-lymphocytes, rapid spreading of peripheral blood monocytes, stimulation of lymphocyte blastogenesis and lysis of erythrocytes. This Sus scrofa (Pig) protein is Complement factor B (CFB).